We begin with the raw amino-acid sequence, 137 residues long: ATP synthase epsilon chain (137 aa).

The protein belongs to the ATPase epsilon chain family. As to quaternary structure, F-type ATPases have 2 components, CF(1) - the catalytic core - and CF(0) - the membrane proton channel. CF(1) has five subunits: alpha(3), beta(3), gamma(1), delta(1), epsilon(1). CF(0) has three main subunits: a, b and c.

Its subcellular location is the cellular thylakoid membrane. Its function is as follows. Produces ATP from ADP in the presence of a proton gradient across the membrane. This chain is ATP synthase epsilon chain (atpC), found in Nostoc sp. (strain PCC 7120 / SAG 25.82 / UTEX 2576).